We begin with the raw amino-acid sequence, 119 residues long: Holo-[acyl-carrier-protein] synthase (119 aa).

Positions 8 and 59 each coordinate Mg(2+).

Belongs to the P-Pant transferase superfamily. AcpS family. Mg(2+) is required as a cofactor.

Its subcellular location is the cytoplasm. The catalysed reaction is apo-[ACP] + CoA = holo-[ACP] + adenosine 3',5'-bisphosphate + H(+). Transfers the 4'-phosphopantetheine moiety from coenzyme A to a Ser of acyl-carrier-protein. The polypeptide is Holo-[acyl-carrier-protein] synthase (Staphylococcus aureus (strain USA300)).